The chain runs to 619 residues: Very-long-chain aldehyde decarbonylase GL1-1 (619 aa).

5 helical membrane passes run 44–64, 93–113, 123–143, 190–210, and 322–342; these read LLLL…WSSF, DNFL…FPSL, GLAV…YAAH, AAAC…VLGF, and PFLL…WAWS. In terms of domain architecture, Fatty acid hydroxylase spans 129 to 269; it reads LLHVAATEPL…MPLFDLIGGT (141 aa).

It belongs to the sterol desaturase family. Homodimer.

It localises to the endoplasmic reticulum membrane. The catalysed reaction is a long-chain fatty aldehyde + 2 NADPH + O2 + H(+) = a long-chain alkane + formate + 2 NADP(+) + H2O. In terms of biological role, aldehyde decarbonylase involved in the conversion of aldehydes to alkanes. Core component of a very-long-chain alkane synthesis complex. This is Very-long-chain aldehyde decarbonylase GL1-1 from Oryza sativa subsp. indica (Rice).